The sequence spans 60 residues: Toxin TdNa2 (60 aa).

The region spanning 1–59 (RDAYPADWRGCKPSCPWGSSSWCNEECTSLGGSSGYCAWPACWCYGLPDSVRYYNNKCH) is the LCN-type CS-alpha/beta domain. Disulfide bonds link Cys11–Cys58, Cys15–Cys37, Cys23–Cys42, and Cys27–Cys44.

This sequence belongs to the long (4 C-C) scorpion toxin superfamily. Sodium channel inhibitor family. Beta subfamily. Expressed by the venom gland.

The protein localises to the secreted. Functionally, inhibits the sodium currents (Nav) in an apparent irreversible manner. Produces small depolarization and induces repetitive firing in squid axons. Is specific for arthropods (crickets, triatomides, crabs and squids), but is non-toxic to mice. The protein is Toxin TdNa2 of Tityus discrepans (Venezuelan scorpion).